The chain runs to 200 residues: NADH-quinone oxidoreductase subunit C (200 aa).

It belongs to the complex I 30 kDa subunit family. As to quaternary structure, NDH-1 is composed of 14 different subunits. Subunits NuoB, C, D, E, F, and G constitute the peripheral sector of the complex.

The protein localises to the cell inner membrane. It catalyses the reaction a quinone + NADH + 5 H(+)(in) = a quinol + NAD(+) + 4 H(+)(out). Its function is as follows. NDH-1 shuttles electrons from NADH, via FMN and iron-sulfur (Fe-S) centers, to quinones in the respiratory chain. The immediate electron acceptor for the enzyme in this species is believed to be ubiquinone. Couples the redox reaction to proton translocation (for every two electrons transferred, four hydrogen ions are translocated across the cytoplasmic membrane), and thus conserves the redox energy in a proton gradient. The protein is NADH-quinone oxidoreductase subunit C of Agrobacterium fabrum (strain C58 / ATCC 33970) (Agrobacterium tumefaciens (strain C58)).